Here is a 412-residue protein sequence, read N- to C-terminus: Peptidase T (412 aa).

His84 is a binding site for Zn(2+). Asp86 is an active-site residue. Asp146 lines the Zn(2+) pocket. Glu179 (proton acceptor) is an active-site residue. Glu180, Asp202, and His385 together coordinate Zn(2+).

This sequence belongs to the peptidase M20B family. The cofactor is Zn(2+).

It is found in the cytoplasm. It catalyses the reaction Release of the N-terminal residue from a tripeptide.. Cleaves the N-terminal amino acid of tripeptides. This chain is Peptidase T, found in Haemophilus influenzae (strain PittGG).